The primary structure comprises 34 residues: Protein MgtT (34 aa).

The segment at 1–34 (MNGDNPSPNRPLVTVVYKGPDFYDGEKKPPVNRR) is disordered. Over residues 24 to 34 (DGEKKPPVNRR) the composition is skewed to basic and acidic residues.

This chain is Protein MgtT, found in Escherichia coli (strain K12).